We begin with the raw amino-acid sequence, 145 residues long: Protein MMF1, mitochondrial (145 aa).

Residues 1–17 constitute a mitochondrion transit peptide; that stretch reads MFLRNSVLRTAPVLRRG.

Belongs to the RutC family.

It localises to the mitochondrion matrix. Functionally, plays a role in the maintenance of mitochondrial DNA. The protein is Protein MMF1, mitochondrial (MMF1) of Saccharomyces cerevisiae (strain ATCC 204508 / S288c) (Baker's yeast).